The primary structure comprises 159 residues: Ribosome maturation factor RimP (159 aa).

This sequence belongs to the RimP family.

The protein localises to the cytoplasm. In terms of biological role, required for maturation of 30S ribosomal subunits. This chain is Ribosome maturation factor RimP, found in Streptococcus pneumoniae serotype 2 (strain D39 / NCTC 7466).